A 163-amino-acid polypeptide reads, in one-letter code: Ribosome maturation factor RimM (163 aa).

Positions 92–162 constitute a PRC barrel domain; it reads EDEFYVADLV…AGRAVVRPPE (71 aa).

Belongs to the RimM family. Binds ribosomal protein uS19.

It is found in the cytoplasm. An accessory protein needed during the final step in the assembly of 30S ribosomal subunit, possibly for assembly of the head region. Essential for efficient processing of 16S rRNA. May be needed both before and after RbfA during the maturation of 16S rRNA. It has affinity for free ribosomal 30S subunits but not for 70S ribosomes. In Rubrobacter xylanophilus (strain DSM 9941 / JCM 11954 / NBRC 16129 / PRD-1), this protein is Ribosome maturation factor RimM.